The chain runs to 154 residues: Acidic phospholipase A2 1 (154 aa).

Positions 1-19 (MHPAHLLVLLGVCVSLLGA) are cleaved as a signal peptide. Positions 20–27 (ARIPPLPL) are excised as a propeptide. Intrachain disulfides connect Cys-38/Cys-104, Cys-54/Cys-153, Cys-56/Cys-72, Cys-71/Cys-132, Cys-78/Cys-125, Cys-88/Cys-118, and Cys-111/Cys-123. Positions 55, 57, and 59 each coordinate Ca(2+). The active site involves His-75. Asp-76 provides a ligand contact to Ca(2+). Residue Asp-126 is part of the active site.

Belongs to the phospholipase A2 family. Group I subfamily. D49 sub-subfamily. As to quaternary structure, monomer. Ca(2+) serves as cofactor. Expressed by the venom gland.

The protein resides in the secreted. It carries out the reaction a 1,2-diacyl-sn-glycero-3-phosphocholine + H2O = a 1-acyl-sn-glycero-3-phosphocholine + a fatty acid + H(+). Its function is as follows. Snake venom phospholipase A2 (PLA2) that shows moderate enzymatic activity and exhibits procoagulant activity. PLA2 catalyzes the calcium-dependent hydrolysis of the 2-acyl groups in 3-sn-phosphoglycerides. The sequence is that of Acidic phospholipase A2 1 from Pseudonaja textilis (Eastern brown snake).